A 487-amino-acid chain; its full sequence is Calcium-binding tyrosine phosphorylation-regulated protein (487 aa).

The RIIa domain maps to 12–49 (YGLKTLLEGISRAVLKTNPSDINQFAAAYFQELTMYRG). Basic and acidic residues-rich tracts occupy residues 78 to 91 (KKLECLKEPEKTSV) and 101 to 117 (KSTDTDEDNVTRTEYSD). Disordered regions lie at residues 78 to 163 (KKLE…AVSP), 243 to 271 (VDLGSQPKENEAEQSTASSVPLQDEQEPP), and 420 to 487 (IVSD…ATAE). Low complexity predominate over residues 140–152 (SSSKPATPKATTP). Polar residues-rich tracts occupy residues 420-436 (IVSDNTGQEESGENSVP) and 455-464 (SGTSVKSSSG). A compositionally biased stretch (acidic residues) spans 478-487 (IEPEGEATAE).

As to quaternary structure, interacts with FSCB. Phosphorylated on tyrosine residues during in vitro capacitation. Dephosphorylation affects its ability to bind calcium.

It localises to the cytoplasm. The protein localises to the cytoskeleton. It is found in the cell projection. Its subcellular location is the cilium. The protein resides in the flagellum. In terms of biological role, may function as a regulator of both motility- and head-associated functions such as capacitation and the acrosome reaction. May bind calcium in vitro. This is Calcium-binding tyrosine phosphorylation-regulated protein (CABYR) from Macaca fascicularis (Crab-eating macaque).